Consider the following 678-residue polypeptide: Glutamate--cysteine ligase (678 aa).

This sequence belongs to the glutamate--cysteine ligase type 3 family.

It carries out the reaction L-cysteine + L-glutamate + ATP = gamma-L-glutamyl-L-cysteine + ADP + phosphate + H(+). Its pathway is sulfur metabolism; glutathione biosynthesis; glutathione from L-cysteine and L-glutamate: step 1/2. Feedback inhibition by glutathione. In terms of biological role, catalyzes the ATP-dependent condensation of cysteine and glutamate to form the dipeptide gamma-glutamylcysteine (gamma-GC), the first and rate-limiting step in the production of glutathione (GSH). This chain is Glutamate--cysteine ligase (GSH1), found in Saccharomyces cerevisiae (strain ATCC 204508 / S288c) (Baker's yeast).